Consider the following 130-residue polypeptide: Prefoldin subunit alpha (130 aa).

It belongs to the prefoldin subunit alpha family. In terms of assembly, heterohexamer of two alpha and four beta subunits.

It is found in the cytoplasm. In terms of biological role, molecular chaperone capable of stabilizing a range of proteins. Seems to fulfill an ATP-independent, HSP70-like function in archaeal de novo protein folding. This chain is Prefoldin subunit alpha (pfdA), found in Thermoplasma acidophilum (strain ATCC 25905 / DSM 1728 / JCM 9062 / NBRC 15155 / AMRC-C165).